The chain runs to 112 residues: Outer membrane protein assembly factor BamE (112 aa).

A signal peptide spans 1-19 (MRCKTLTAAAAVLLMLTAG). Cys20 carries the N-palmitoyl cysteine lipid modification. A lipid anchor (S-diacylglycerol cysteine) is attached at Cys20.

This sequence belongs to the BamE family. As to quaternary structure, part of the Bam complex, which is composed of the outer membrane protein BamA, and four lipoproteins BamB, BamC, BamD and BamE.

It is found in the cell outer membrane. In terms of biological role, part of the outer membrane protein assembly complex, which is involved in assembly and insertion of beta-barrel proteins into the outer membrane. This chain is Outer membrane protein assembly factor BamE, found in Salmonella typhimurium (strain LT2 / SGSC1412 / ATCC 700720).